We begin with the raw amino-acid sequence, 636 residues long: DNA mismatch repair protein MutL (636 aa).

Residues 362–393 (RKTPEVHEEAEKPEFLVKQEAKNSEEPKNETE) are disordered. Residues 363–393 (KTPEVHEEAEKPEFLVKQEAKNSEEPKNETE) are compositionally biased toward basic and acidic residues.

The protein belongs to the DNA mismatch repair MutL/HexB family.

This protein is involved in the repair of mismatches in DNA. It is required for dam-dependent methyl-directed DNA mismatch repair. May act as a 'molecular matchmaker', a protein that promotes the formation of a stable complex between two or more DNA-binding proteins in an ATP-dependent manner without itself being part of a final effector complex. This Lactobacillus helveticus (strain DPC 4571) protein is DNA mismatch repair protein MutL.